Here is a 459-residue protein sequence, read N- to C-terminus: tRNA modification GTPase MnmE (459 aa).

(6S)-5-formyl-5,6,7,8-tetrahydrofolate contacts are provided by R22, E85, and R124. One can recognise a TrmE-type G domain in the interval 221–380; that stretch reads GLSTVIVGRP…LEIQIKDLFF (160 aa). N231 provides a ligand contact to K(+). Residues 231–236, 250–256, and 275–278 contribute to the GTP site; these read NVGKSS, TEVAGTT, and DTAG. S235 contributes to the Mg(2+) binding site. K(+) is bound by residues T250, V252, and T255. A Mg(2+)-binding site is contributed by T256. K459 is a binding site for (6S)-5-formyl-5,6,7,8-tetrahydrofolate.

It belongs to the TRAFAC class TrmE-Era-EngA-EngB-Septin-like GTPase superfamily. TrmE GTPase family. In terms of assembly, homodimer. Heterotetramer of two MnmE and two MnmG subunits. Requires K(+) as cofactor.

It localises to the cytoplasm. Its function is as follows. Exhibits a very high intrinsic GTPase hydrolysis rate. Involved in the addition of a carboxymethylaminomethyl (cmnm) group at the wobble position (U34) of certain tRNAs, forming tRNA-cmnm(5)s(2)U34. This is tRNA modification GTPase MnmE from Staphylococcus epidermidis (strain ATCC 35984 / DSM 28319 / BCRC 17069 / CCUG 31568 / BM 3577 / RP62A).